A 486-amino-acid chain; its full sequence is UDP-N-acetylmuramate--L-alanine ligase (486 aa).

An ATP-binding site is contributed by 126–132; that stretch reads GTHGKTS.

Belongs to the MurCDEF family.

It localises to the cytoplasm. It catalyses the reaction UDP-N-acetyl-alpha-D-muramate + L-alanine + ATP = UDP-N-acetyl-alpha-D-muramoyl-L-alanine + ADP + phosphate + H(+). It participates in cell wall biogenesis; peptidoglycan biosynthesis. Its function is as follows. Cell wall formation. The protein is UDP-N-acetylmuramate--L-alanine ligase of Buchnera aphidicola subsp. Baizongia pistaciae (strain Bp).